Here is a 299-residue protein sequence, read N- to C-terminus: 4-diphosphocytidyl-2-C-methyl-D-erythritol kinase (299 aa).

The active site involves lysine 16. ATP is bound at residue 97–107; it reads PVASGIGGGSA. Aspartate 140 is an active-site residue.

The protein belongs to the GHMP kinase family. IspE subfamily.

It carries out the reaction 4-CDP-2-C-methyl-D-erythritol + ATP = 4-CDP-2-C-methyl-D-erythritol 2-phosphate + ADP + H(+). The protein operates within isoprenoid biosynthesis; isopentenyl diphosphate biosynthesis via DXP pathway; isopentenyl diphosphate from 1-deoxy-D-xylulose 5-phosphate: step 3/6. Functionally, catalyzes the phosphorylation of the position 2 hydroxy group of 4-diphosphocytidyl-2C-methyl-D-erythritol. In Roseobacter denitrificans (strain ATCC 33942 / OCh 114) (Erythrobacter sp. (strain OCh 114)), this protein is 4-diphosphocytidyl-2-C-methyl-D-erythritol kinase.